The following is a 210-amino-acid chain: Urease accessory protein UreF (210 aa).

The protein belongs to the UreF family. As to quaternary structure, ureD, UreF and UreG form a complex that acts as a GTP-hydrolysis-dependent molecular chaperone, activating the urease apoprotein by helping to assemble the nickel containing metallocenter of UreC. The UreE protein probably delivers the nickel.

The protein localises to the cytoplasm. Functionally, required for maturation of urease via the functional incorporation of the urease nickel metallocenter. The sequence is that of Urease accessory protein UreF from Cereibacter sphaeroides (strain ATCC 17029 / ATH 2.4.9) (Rhodobacter sphaeroides).